We begin with the raw amino-acid sequence, 293 residues long: Elongation factor Ts (293 aa).

An involved in Mg(2+) ion dislocation from EF-Tu region spans residues 80–83; that stretch reads TDFV.

It belongs to the EF-Ts family.

It localises to the cytoplasm. In terms of biological role, associates with the EF-Tu.GDP complex and induces the exchange of GDP to GTP. It remains bound to the aminoacyl-tRNA.EF-Tu.GTP complex up to the GTP hydrolysis stage on the ribosome. The protein is Elongation factor Ts of Burkholderia vietnamiensis (strain G4 / LMG 22486) (Burkholderia cepacia (strain R1808)).